We begin with the raw amino-acid sequence, 464 residues long: MIRRLLPRTLRARLTALIILSTAATLALSGVALYSALHNRLVGMSSYEMSATLAAMRTHLANVANVDDIPRKSDLWIDQLHGHQNLDLAIYDTDGRLRFATRGFVAPRPALGAPQTRVPASAAPAGATFSYLADDAPLRGGNPRTARIVVQYDGKNDHALLRAYAYTVVVIEVLAVVLTAALAYGIAMLGLSPLRRLVARAEQMSSSRLAQPLPELDTSGELKEMEHAFNAMLKRLDESFVRLSQFSSNLAHDMRTPLTNLLAEAQVALSKPRTADEYRDVIESSIDEYQRLSRMIEDMLFLARSDNAQSHLAIRTLDAAAQAERVAGYYEPMAEDADVRIVVRGKAEVRADALLYHRALSNLISNALNHAPRGSTITIECAQAADAATISVSDTGRGIEAPHRERIFERFYRVDPARHNSASGTGLGLAIVRSIMENHGGTCGVDSEPHVRTTFWLKFPAHAA.

Over 1 to 13 (MIRRLLPRTLRAR) the chain is Periplasmic. The chain crosses the membrane as a helical span at residues 14–34 (LTALIILSTAATLALSGVALY). Residues 35-166 (SALHNRLVGM…DHALLRAYAY (132 aa)) are Cytoplasmic-facing. Residues 167–187 (TVVVIEVLAVVLTAALAYGIA) form a helical membrane-spanning segment. An HAMP domain is found at 188–241 (MLGLSPLRRLVARAEQMSSSRLAQPLPELDTSGELKEMEHAFNAMLKRLDESFV). The Periplasmic segment spans residues 188 to 464 (MLGLSPLRRL…FWLKFPAHAA (277 aa)). Positions 249-463 (NLAHDMRTPL…TFWLKFPAHA (215 aa)) constitute a Histidine kinase domain. H252 carries the phosphohistidine; by autocatalysis modification.

The protein resides in the cell inner membrane. It catalyses the reaction ATP + protein L-histidine = ADP + protein N-phospho-L-histidine.. In terms of biological role, member of the two-component regulatory system IrlR/IrlS. May be involved in invasion of eukaryotic cells and heavy-metal resistance. Probably activates IrlR by phosphorylation. This chain is Sensor protein IrlS (irlS), found in Burkholderia pseudomallei (strain K96243).